The chain runs to 219 residues: Probable GTP-binding protein EngB (219 aa).

The EngB-type G domain occupies Ser-42–Leu-219. Residues Gly-50–Ser-57, Gly-77–Glu-81, Asp-97–Gly-100, Thr-164–Asp-167, and Thr-198–Ser-200 contribute to the GTP site. Ser-57 and Thr-79 together coordinate Mg(2+).

This sequence belongs to the TRAFAC class TrmE-Era-EngA-EngB-Septin-like GTPase superfamily. EngB GTPase family. The cofactor is Mg(2+).

Necessary for normal cell division and for the maintenance of normal septation. This is Probable GTP-binding protein EngB from Sphingopyxis alaskensis (strain DSM 13593 / LMG 18877 / RB2256) (Sphingomonas alaskensis).